The primary structure comprises 497 residues: Probable cytosol aminopeptidase (497 aa).

2 residues coordinate Mn(2+): K267 and D272. K279 is a catalytic residue. Mn(2+)-binding residues include D290, D349, and E351. R353 is a catalytic residue.

Belongs to the peptidase M17 family. Mn(2+) is required as a cofactor.

It is found in the cytoplasm. It carries out the reaction Release of an N-terminal amino acid, Xaa-|-Yaa-, in which Xaa is preferably Leu, but may be other amino acids including Pro although not Arg or Lys, and Yaa may be Pro. Amino acid amides and methyl esters are also readily hydrolyzed, but rates on arylamides are exceedingly low.. The catalysed reaction is Release of an N-terminal amino acid, preferentially leucine, but not glutamic or aspartic acids.. Functionally, presumably involved in the processing and regular turnover of intracellular proteins. Catalyzes the removal of unsubstituted N-terminal amino acids from various peptides. The protein is Probable cytosol aminopeptidase of Pseudomonas putida (strain GB-1).